The primary structure comprises 178 residues: Small ribosomal subunit protein uS5 (178 aa).

The S5 DRBM domain maps to 15–78 (FEEKIIEIRR…SAAKRNIIEV (64 aa)).

Belongs to the universal ribosomal protein uS5 family. As to quaternary structure, part of the 30S ribosomal subunit. Contacts proteins S4 and S8.

In terms of biological role, with S4 and S12 plays an important role in translational accuracy. Its function is as follows. Located at the back of the 30S subunit body where it stabilizes the conformation of the head with respect to the body. This chain is Small ribosomal subunit protein uS5, found in Thermotoga sp. (strain RQ2).